Reading from the N-terminus, the 429-residue chain is MRVVVLGSGVVGVTSAYYLARAGHEVTVIDREAGPALETSFANAGQISPGYASPWAAPGVPLKAVKWMFQKHAPLAIRLDGTQFQLQWMWQMLQNCTSSRYAVNKGRMVRLAEYSRDCLQALRAETGIQYEGRTGGTLQVFRTQQQFEGAAKDIAVLREASVPYELLSPAELAQAEPALAAVSHKLTGGLRLPGDETGDCQMFTTRLAALAEQLGVKFRYNTPIDALAMAGDRIAGVKCGEELVRADSFVVALGSYSTQFLSGLVKIPVYPLKGYSITAPIVNEASAPVSTVLDETYKIAITRFDDRIRVGGMAEIVGFDKSLREARRETLELCVNDLFPGGGDTSKATFWSGLRPMTPDGTPIVGRTPVANLFLNTGHGTLGWTMSCGSGQLLADVMSGKQPAIKADDLSVHRYLGETRGAHRPAYAA.

3–17 lines the FAD pocket; that stretch reads VVVLGSGVVGVTSAY.

Belongs to the DadA oxidoreductase family. The cofactor is FAD.

The catalysed reaction is a D-alpha-amino acid + A + H2O = a 2-oxocarboxylate + AH2 + NH4(+). Its pathway is amino-acid degradation; D-alanine degradation; NH(3) and pyruvate from D-alanine: step 1/1. In terms of biological role, oxidative deamination of D-amino acids. This Paraburkholderia xenovorans (strain LB400) protein is D-amino acid dehydrogenase.